A 658-amino-acid chain; its full sequence is MAEAAAAAGGTGLGAGASYGSAADRDRDPDPDRAGRRLRVLSGHLLGRPREALSTNECKARRAASAATAAPTATPAAQESGTIPKKRQEVMKWNGWGYNDSKFIFNKKGQIELTGKRYPLSGMGLPTFKEWIQNTLGVNVEHKTTSKASLNPSDTPPSVVNEDFLHDLKETNISYSQEADDRVFRAHGHCLHEIFLLREGMFERIPDIVLWPTCHDDVVKIVNLACKYNLCIIPIGGGTSVSYGLMCPADETRTIISLDTSQMNRILWVDENNLTAHVEAGITGQELERQLKESGYCTGHEPDSLEFSTVGGWVSTRASGMKKNIYGNIEDLVVHIKMVTPRGIIEKSCQGPRMSTGPDIHHFIMGSEGTLGVITEATIKIRPVPEYQKYGSVAFPNFEQGVACLREIAKQRCAPASIRLMDNKQFQFGHALKPQVSSIFTSFLDGLKKFYITKFKGFDPNQLSVATLLFEGDREKVLQHEKQVYDIAAKFGGLAAGEDNGQRGYLLTYVIAYIRDLALEYYVLGESFETSAPWDRVVDLCRNVKERITRECKEKGVQFAPFSTCRVTQTYDAGACIYFYFAFNYRGISDPLTVFEQTEAAAREEILANGGSLSHHHGVGKLRKQWLKESISDVGFGMLKSVKEYVDPNNIFGNRNLL.

Disordered regions lie at residues 1-41 (MAEA…LRVL) and 63-86 (AASA…IPKK). A peroxisome-targeting transit peptide spans 1-58 (MAEAAAAAGGTGLGAGASYGSAADRDRDPDPDRAGRRLRVLSGHLLGRPREALSTNEC). Residues 23-35 (ADRDRDPDPDRAG) show a composition bias toward basic and acidic residues. Low complexity predominate over residues 63 to 77 (AASAATAAPTATPAA). Position 65 is a phosphoserine (serine 65). Threonine 74 bears the Phosphothreonine mark. Lysine 102 carries the post-translational modification N6-acetyllysine. The FAD-binding PCMH-type domain maps to 202–384 (FERIPDIVLW…TEATIKIRPV (183 aa)). FAD-binding positions include 234–240 (PIGGGTS), 303–309 (DSLEFST), and 316–319 (TRAS). An N6-acetyllysine modification is found at lysine 347. 368–374 (EGTLGVI) contributes to the FAD binding site. Substrate is bound at residue arginine 515. Tyrosine 578 functions as the Proton donor/acceptor in the catalytic mechanism. 2 important for enzyme activity regions span residues 615 to 617 (HHH) and 654 to 658 (NRNLL).

Belongs to the FAD-binding oxidoreductase/transferase type 4 family. As to quaternary structure, homodimer. Requires FAD as cofactor.

It localises to the peroxisome membrane. Its subcellular location is the peroxisome. The enzyme catalyses a long chain fatty alcohol + a 1-acylglycerone 3-phosphate = a 1-O-alkylglycerone 3-phosphate + a long-chain fatty acid + H(+). It catalyses the reaction hexadecan-1-ol + 1-hexadecanoylglycerone 3-phosphate = 1-O-hexadecylglycerone 3-phosphate + hexadecanoate + H(+). The catalysed reaction is 1-hexadecanoylglycerone 3-phosphate + a long-chain fatty acid = a 1-acylglycerone 3-phosphate + hexadecanoate. It functions in the pathway glycerolipid metabolism; ether lipid biosynthesis. Catalyzes the exchange of the acyl chain in acyl-dihydroxyacetonephosphate (acyl-DHAP) for a long chain fatty alcohol, yielding the first ether linked intermediate, i.e. alkyl-dihydroxyacetonephosphate (alkyl-DHAP), in the pathway of ether lipid biosynthesis. The sequence is that of Alkyldihydroxyacetonephosphate synthase, peroxisomal (AGPS) from Homo sapiens (Human).